The following is a 750-amino-acid chain: Ribosomal RNA large subunit methyltransferase K/L (750 aa).

The region spanning 46–157 (TAYRLCLWSR…RGEAILSLDL (112 aa)) is the THUMP domain.

This sequence belongs to the methyltransferase superfamily. RlmKL family.

The protein localises to the cytoplasm. It catalyses the reaction guanosine(2445) in 23S rRNA + S-adenosyl-L-methionine = N(2)-methylguanosine(2445) in 23S rRNA + S-adenosyl-L-homocysteine + H(+). It carries out the reaction guanosine(2069) in 23S rRNA + S-adenosyl-L-methionine = N(2)-methylguanosine(2069) in 23S rRNA + S-adenosyl-L-homocysteine + H(+). Its function is as follows. Specifically methylates the guanine in position 2445 (m2G2445) and the guanine in position 2069 (m7G2069) of 23S rRNA. This is Ribosomal RNA large subunit methyltransferase K/L from Pseudomonas syringae pv. tomato (strain ATCC BAA-871 / DC3000).